Consider the following 452-residue polypeptide: CASP-like protein 4A1 (452 aa).

Residues 1-17 (MGLRDSLKEREDRRSSE) show a composition bias toward basic and acidic residues. Disordered stretches follow at residues 1–39 (MGLR…RKES), 71–147 (RAGP…ARSS), and 164–283 (AKYV…VQFR). The Cytoplasmic portion of the chain corresponds to 1–305 (MGLRDSLKER…KRRAAAMQRT (305 aa)). A compositionally biased stretch (polar residues) spans 25–34 (SWMTRESTTG). 2 stretches are compositionally biased toward low complexity: residues 105–126 (QAQA…TGSG) and 190–205 (GWYS…AAPP). Residues 211–272 (DPPPAPPRRQ…TAPAPAPVPA (62 aa)) show a composition bias toward pro residues. The helical transmembrane segment at 306–326 (ALLARGAAAGLCLAALAVLAA) threads the bilayer. Topologically, residues 327–347 (DTRKGWARDSYSNYTQFRYSE) are extracellular. The N-linked (GlcNAc...) asparagine glycan is linked to Asn339. Residues 348–368 (AVNVIGFIYSVFQFVALVELM) traverse the membrane as a helical segment. Residues 369–389 (RRNKHLIPHPKRDLFDFTMDQ) are Cytoplasmic-facing. The helical transmembrane segment at 390-406 (VLTYLLISSSSSATARV) threads the bilayer. The Extracellular segment spans residues 407-423 (SDLIDNWGSDPFPSMAN). N-linked (GlcNAc...) asparagine glycosylation occurs at Asn423. The chain crosses the membrane as a helical span at residues 424–444 (GSIAISFLAFAVFAICSLISA). Topologically, residues 445–452 (YNLFRRDV) are cytoplasmic.

The protein belongs to the Casparian strip membrane proteins (CASP) family. As to quaternary structure, homodimer and heterodimers.

It localises to the cell membrane. The chain is CASP-like protein 4A1 from Sorghum bicolor (Sorghum).